A 236-amino-acid chain; its full sequence is UPF0257 lipoprotein YnfC (236 aa).

A signal peptide spans 1–16 (MKYKLLPCLLAIFLTG). Cysteine 17 carries N-palmitoyl cysteine lipidation. Cysteine 17 is lipidated: S-diacylglycerol cysteine.

The protein belongs to the UPF0257 family.

The protein localises to the cell membrane. The sequence is that of UPF0257 lipoprotein YnfC from Escherichia coli O7:K1 (strain IAI39 / ExPEC).